Consider the following 78-residue polypeptide: uncharacterized protein (78 aa).

A disordered region spans residues 20–78 (LQDLFPPHFGNEEADEDDEDGDKYGDDDGEFYGDNDGDNDGDNDGVNDGVGDGPPSTLL). Positions 31–64 (EEADEDDEDGDKYGDDDGEFYGDNDGDNDGDNDG) are enriched in acidic residues.

This is an uncharacterized protein from Dictyostelium discoideum (Social amoeba).